A 722-amino-acid chain; its full sequence is NCK-interacting protein with SH3 domain (722 aa).

The region spanning 1 to 58 (MYRALYAFRSAEPNALAFAAGETFLVLERSSAHWWLAARARSGETGYVPPAYLRRLQG) is the SH3 domain. Disordered stretches follow at residues 101–122 (KETL…SSTS) and 149–286 (PSSE…ASDD). Low complexity predominate over residues 110–121 (SASSVAVMTSST). A Phosphoserine modification is found at Ser120. A compositionally biased stretch (pro residues) spans 169 to 185 (QIPPQPRRAAPTTPPPP). A Nuclear localization signal motif is present at residues 175 to 192 (RRAAPTTPPPPVKRRDRE). At Thr181 the chain carries Phosphothreonine. Positions 206–240 (PSGGNSVSSGSSVSSTSLDTLYTSSSPSEPGSSCS) are enriched in low complexity. The residue at position 294 (Ser294) is a Phosphoserine.

Associates with the intermediate filaments, vimentin and desmin. Binds the first and third SH3 domains of NCK. Binds the proline-rich domains of N-WASP through its SH3 domain. Similarly, binds diaphanous protein homolog 1 (DRF1). Binds the SH3 domains of GRB2 through its proline-rich domains. Interacts with Helicobacter pylori toxin vacA. Isoform 4 interacts with FHOD1. Interacts with FASLG. Interacts with TMIGD2. In terms of tissue distribution, highest expression in heart, brain, skeletal muscle, kidney and liver. Lower levels in placenta, lung, small intestine and leukocytes. Weak expression in colon, thymus and spleen.

It localises to the nucleus. Has an important role in stress fiber formation induced by active diaphanous protein homolog 1 (DRF1). Induces microspike formation, in vivo. In vitro, stimulates N-WASP-induced ARP2/3 complex activation in the absence of CDC42. May play an important role in the maintenance of sarcomeres and/or in the assembly of myofibrils into sarcomeres. Implicated in regulation of actin polymerization and cell adhesion. Plays a role in angiogenesis. This Homo sapiens (Human) protein is NCK-interacting protein with SH3 domain (NCKIPSD).